The following is a 72-amino-acid chain: Translation initiation factor IF-1 (72 aa).

The 72-residue stretch at Met1–Lys72 folds into the S1-like domain.

It belongs to the IF-1 family. Component of the 30S ribosomal translation pre-initiation complex which assembles on the 30S ribosome in the order IF-2 and IF-3, IF-1 and N-formylmethionyl-tRNA(fMet); mRNA recruitment can occur at any time during PIC assembly.

The protein resides in the cytoplasm. Functionally, one of the essential components for the initiation of protein synthesis. Stabilizes the binding of IF-2 and IF-3 on the 30S subunit to which N-formylmethionyl-tRNA(fMet) subsequently binds. Helps modulate mRNA selection, yielding the 30S pre-initiation complex (PIC). Upon addition of the 50S ribosomal subunit IF-1, IF-2 and IF-3 are released leaving the mature 70S translation initiation complex. This chain is Translation initiation factor IF-1, found in Geobacter sulfurreducens (strain ATCC 51573 / DSM 12127 / PCA).